The sequence spans 510 residues: Probable ADP-ribosylation factor-binding protein C1F3.05 (510 aa).

In terms of domain architecture, VHS spans 14–150; that stretch reads ATDQFNLEPN…LMAFRGYKFP (137 aa). The GAT domain occupies 177–301; sequence LEAHKAKLQE…VIEECSNSDL (125 aa). Residues 391–510 form the GAE domain; sequence TNSSLTSILQ…VEQGESHLPL (120 aa).

The protein resides in the golgi apparatus. It is found in the trans-Golgi network. May play a role in the regulation of membrane traffic through the trans-Golgi network. The sequence is that of Probable ADP-ribosylation factor-binding protein C1F3.05 from Schizosaccharomyces pombe (strain 972 / ATCC 24843) (Fission yeast).